A 290-amino-acid chain; its full sequence is Acetyl-coenzyme A carboxylase carboxyl transferase subunit beta (290 aa).

Positions Ile30–Ala290 constitute a CoA carboxyltransferase N-terminal domain. 4 residues coordinate Zn(2+): Cys34, Cys37, Cys53, and Cys56. The C4-type zinc finger occupies Cys34 to Cys56.

The protein belongs to the AccD/PCCB family. In terms of assembly, acetyl-CoA carboxylase is a heterohexamer composed of biotin carboxyl carrier protein (AccB), biotin carboxylase (AccC) and two subunits each of ACCase subunit alpha (AccA) and ACCase subunit beta (AccD). Zn(2+) serves as cofactor.

It is found in the cytoplasm. The catalysed reaction is N(6)-carboxybiotinyl-L-lysyl-[protein] + acetyl-CoA = N(6)-biotinyl-L-lysyl-[protein] + malonyl-CoA. The protein operates within lipid metabolism; malonyl-CoA biosynthesis; malonyl-CoA from acetyl-CoA: step 1/1. Functionally, component of the acetyl coenzyme A carboxylase (ACC) complex. Biotin carboxylase (BC) catalyzes the carboxylation of biotin on its carrier protein (BCCP) and then the CO(2) group is transferred by the transcarboxylase to acetyl-CoA to form malonyl-CoA. The sequence is that of Acetyl-coenzyme A carboxylase carboxyl transferase subunit beta from Staphylococcus carnosus (strain TM300).